Here is a 577-residue protein sequence, read N- to C-terminus: Proline--tRNA ligase (577 aa).

Belongs to the class-II aminoacyl-tRNA synthetase family. ProS type 1 subfamily. Homodimer.

It localises to the cytoplasm. It carries out the reaction tRNA(Pro) + L-proline + ATP = L-prolyl-tRNA(Pro) + AMP + diphosphate. Its function is as follows. Catalyzes the attachment of proline to tRNA(Pro) in a two-step reaction: proline is first activated by ATP to form Pro-AMP and then transferred to the acceptor end of tRNA(Pro). As ProRS can inadvertently accommodate and process non-cognate amino acids such as alanine and cysteine, to avoid such errors it has two additional distinct editing activities against alanine. One activity is designated as 'pretransfer' editing and involves the tRNA(Pro)-independent hydrolysis of activated Ala-AMP. The other activity is designated 'posttransfer' editing and involves deacylation of mischarged Ala-tRNA(Pro). The misacylated Cys-tRNA(Pro) is not edited by ProRS. The chain is Proline--tRNA ligase from Limosilactobacillus reuteri (strain DSM 20016) (Lactobacillus reuteri).